The sequence spans 352 residues: Fe(3+) ions import ATP-binding protein FbpC (352 aa).

The ABC transporter domain occupies 5 to 239 (LHIGHLSKSF…PADLDAALFI (235 aa)). 37–44 (GASGCGKT) provides a ligand contact to ATP.

Belongs to the ABC transporter superfamily. Fe(3+) ion importer (TC 3.A.1.10) family. In terms of assembly, the complex is composed of two ATP-binding proteins (FbpC), two transmembrane proteins (FbpB) and a solute-binding protein (FbpA).

It localises to the cell inner membrane. The enzyme catalyses Fe(3+)(out) + ATP + H2O = Fe(3+)(in) + ADP + phosphate + H(+). In terms of biological role, part of the ABC transporter complex FbpABC involved in Fe(3+) ions import. Responsible for energy coupling to the transport system. This is Fe(3+) ions import ATP-binding protein FbpC from Neisseria meningitidis serogroup A / serotype 4A (strain DSM 15465 / Z2491).